Consider the following 495-residue polypeptide: Mesoderm induction early response protein 1 (495 aa).

2 disordered regions span residues Met1–Ser25 and Gly76–Thr131. Positions Gly83–Asn94 are enriched in acidic residues. Polar residues predominate over residues Gln120 to Phe130. The 99-residue stretch at Lys171–Val269 folds into the ELM2 domain. Residues Glu274 to Arg326 enclose the SANT domain. Disordered regions lie at residues Asp356–Ser397 and His416–Val495. 2 stretches are compositionally biased toward polar residues: residues Thr387–Ser397 and Pro420–Glu440. The segment covering Thr462–Gly476 has biased composition (basic and acidic residues). Over residues Lys477 to Val489 the composition is skewed to polar residues.

It is found in the nucleus. Functionally, transcriptional repressor regulating the expression of a number of genes. Probably functions through recruitment of histone deacetylases involved in chromatin silencing. The sequence is that of Mesoderm induction early response protein 1 (mier1) from Xenopus laevis (African clawed frog).